The chain runs to 698 residues: Elongation factor G (698 aa).

One can recognise a tr-type G domain in the interval 8-284 (ANVRNIGIMA…AVVDFLPSPL (277 aa)). GTP is bound by residues 17–24 (AHIDAGKT), 81–85 (DTPGH), and 135–138 (NKLD). The interval 289-309 (IEGTGTDGETPLQRKPSTSEP) is disordered.

It belongs to the TRAFAC class translation factor GTPase superfamily. Classic translation factor GTPase family. EF-G/EF-2 subfamily.

The protein localises to the cytoplasm. Catalyzes the GTP-dependent ribosomal translocation step during translation elongation. During this step, the ribosome changes from the pre-translocational (PRE) to the post-translocational (POST) state as the newly formed A-site-bound peptidyl-tRNA and P-site-bound deacylated tRNA move to the P and E sites, respectively. Catalyzes the coordinated movement of the two tRNA molecules, the mRNA and conformational changes in the ribosome. The polypeptide is Elongation factor G (Salinispora arenicola (strain CNS-205)).